Here is a 463-residue protein sequence, read N- to C-terminus: Asparagine--tRNA ligase (463 aa).

The protein belongs to the class-II aminoacyl-tRNA synthetase family. As to quaternary structure, homodimer.

The protein resides in the cytoplasm. The enzyme catalyses tRNA(Asn) + L-asparagine + ATP = L-asparaginyl-tRNA(Asn) + AMP + diphosphate + H(+). The chain is Asparagine--tRNA ligase from Clostridium novyi (strain NT).